Reading from the N-terminus, the 126-residue chain is MIRTMLQGKLHRVKVTQADLHYEGSCAIDQDFLEAAGILEYEAIDIYNVDNGQRFSTYAIAAERGSRIISVNGAAARCACVGDKLIICSYVQMSDAAARLHHPKVAYFEGENQLQRKAKAVPVQVA.

Residue Ser-25 is the Schiff-base intermediate with substrate; via pyruvic acid of the active site. A Pyruvic acid (Ser) modification is found at Ser-25. Thr-57 is a substrate binding site. Residue Tyr-58 is the Proton donor of the active site. Substrate is bound at residue 73 to 75 (GAA).

It belongs to the PanD family. Heterooctamer of four alpha and four beta subunits. The cofactor is pyruvate. Is synthesized initially as an inactive proenzyme, which is activated by self-cleavage at a specific serine bond to produce a beta-subunit with a hydroxyl group at its C-terminus and an alpha-subunit with a pyruvoyl group at its N-terminus.

It is found in the cytoplasm. It carries out the reaction L-aspartate + H(+) = beta-alanine + CO2. It functions in the pathway cofactor biosynthesis; (R)-pantothenate biosynthesis; beta-alanine from L-aspartate: step 1/1. Functionally, catalyzes the pyruvoyl-dependent decarboxylation of aspartate to produce beta-alanine. The chain is Aspartate 1-decarboxylase from Yersinia pseudotuberculosis serotype IB (strain PB1/+).